Reading from the N-terminus, the 407-residue chain is Phosphopentomutase (407 aa).

Residues D10, D306, H311, D347, H348, and H359 each coordinate Mn(2+).

This sequence belongs to the phosphopentomutase family. Requires Mn(2+) as cofactor.

It is found in the cytoplasm. The enzyme catalyses 2-deoxy-alpha-D-ribose 1-phosphate = 2-deoxy-D-ribose 5-phosphate. It catalyses the reaction alpha-D-ribose 1-phosphate = D-ribose 5-phosphate. It functions in the pathway carbohydrate degradation; 2-deoxy-D-ribose 1-phosphate degradation; D-glyceraldehyde 3-phosphate and acetaldehyde from 2-deoxy-alpha-D-ribose 1-phosphate: step 1/2. Its function is as follows. Isomerase that catalyzes the conversion of deoxy-ribose 1-phosphate (dRib-1-P) and ribose 1-phosphate (Rib-1-P) to deoxy-ribose 5-phosphate (dRib-5-P) and ribose 5-phosphate (Rib-5-P), respectively. This Buchnera aphidicola subsp. Acyrthosiphon pisum (strain 5A) protein is Phosphopentomutase.